A 523-amino-acid chain; its full sequence is Alanine aminotransferase 2 (523 aa).

The disordered stretch occupies residues 1 to 25; the sequence is MQRAAALVRRGCGPRTPSSWGRSQS. Residues A187, S188, Y216, N271, and S338 each coordinate pyridoxal 5'-phosphate. K341 carries the post-translational modification N6-(pyridoxal phosphate)lysine. Position 350 (R350) interacts with pyridoxal 5'-phosphate. 3 positions are modified to N6-acetyllysine: K415, K505, and K512.

The protein belongs to the class-I pyridoxal-phosphate-dependent aminotransferase family. Alanine aminotransferase subfamily. In terms of assembly, homodimer. It depends on pyridoxal 5'-phosphate as a cofactor. As to expression, expressed at high levels in muscle, adipose tissue, kidney and brain and at lower levels in the liver and breast.

It carries out the reaction L-alanine + 2-oxoglutarate = pyruvate + L-glutamate. The protein operates within amino-acid degradation; L-alanine degradation via transaminase pathway; pyruvate from L-alanine: step 1/1. Its function is as follows. Catalyzes the reversible transamination between alanine and 2-oxoglutarate to form pyruvate and glutamate. The chain is Alanine aminotransferase 2 (GPT2) from Homo sapiens (Human).